A 379-amino-acid chain; its full sequence is Queuine tRNA-ribosyltransferase (379 aa).

Asp-93 acts as the Proton acceptor in catalysis. Substrate-binding positions include 93 to 97, Asp-147, Gln-191, and Gly-218; that span reads DSGGF. Positions 249-255 are RNA binding; the sequence is GVGKPED. The Nucleophile role is filled by Asp-268. Residues 273–277 are RNA binding; important for wobble base 34 recognition; it reads TRNAR. The Zn(2+) site is built by Cys-306, Cys-308, Cys-311, and His-337.

It belongs to the queuine tRNA-ribosyltransferase family. As to quaternary structure, homodimer. Within each dimer, one monomer is responsible for RNA recognition and catalysis, while the other monomer binds to the replacement base PreQ1. The cofactor is Zn(2+).

It catalyses the reaction 7-aminomethyl-7-carbaguanine + guanosine(34) in tRNA = 7-aminomethyl-7-carbaguanosine(34) in tRNA + guanine. It functions in the pathway tRNA modification; tRNA-queuosine biosynthesis. In terms of biological role, catalyzes the base-exchange of a guanine (G) residue with the queuine precursor 7-aminomethyl-7-deazaguanine (PreQ1) at position 34 (anticodon wobble position) in tRNAs with GU(N) anticodons (tRNA-Asp, -Asn, -His and -Tyr). Catalysis occurs through a double-displacement mechanism. The nucleophile active site attacks the C1' of nucleotide 34 to detach the guanine base from the RNA, forming a covalent enzyme-RNA intermediate. The proton acceptor active site deprotonates the incoming PreQ1, allowing a nucleophilic attack on the C1' of the ribose to form the product. After dissociation, two additional enzymatic reactions on the tRNA convert PreQ1 to queuine (Q), resulting in the hypermodified nucleoside queuosine (7-(((4,5-cis-dihydroxy-2-cyclopenten-1-yl)amino)methyl)-7-deazaguanosine). This is Queuine tRNA-ribosyltransferase from Actinobacillus succinogenes (strain ATCC 55618 / DSM 22257 / CCUG 43843 / 130Z).